The chain runs to 372 residues: Glutamate 5-kinase (372 aa).

Residue K14 coordinates ATP. Residues S54, D141, and N153 each contribute to the substrate site. Position 173–174 (173–174 (TD)) interacts with ATP. The region spanning 280–358 (RGHVVIDAGA…GEIETVLGYM (79 aa)) is the PUA domain.

It belongs to the glutamate 5-kinase family.

It localises to the cytoplasm. The enzyme catalyses L-glutamate + ATP = L-glutamyl 5-phosphate + ADP. It functions in the pathway amino-acid biosynthesis; L-proline biosynthesis; L-glutamate 5-semialdehyde from L-glutamate: step 1/2. Functionally, catalyzes the transfer of a phosphate group to glutamate to form L-glutamate 5-phosphate. This chain is Glutamate 5-kinase, found in Burkholderia vietnamiensis (strain G4 / LMG 22486) (Burkholderia cepacia (strain R1808)).